Here is a 617-residue protein sequence, read N- to C-terminus: 1-deoxy-D-xylulose-5-phosphate synthase (617 aa).

Residues His80 and 121-123 (GHS) contribute to the thiamine diphosphate site. Asp152 lines the Mg(2+) pocket. Thiamine diphosphate is bound by residues 153 to 154 (GA), Asn181, Tyr277, and Glu360. Asn181 is a Mg(2+) binding site.

This sequence belongs to the transketolase family. DXPS subfamily. Homodimer. The cofactor is Mg(2+). Thiamine diphosphate is required as a cofactor.

The catalysed reaction is D-glyceraldehyde 3-phosphate + pyruvate + H(+) = 1-deoxy-D-xylulose 5-phosphate + CO2. Its pathway is metabolic intermediate biosynthesis; 1-deoxy-D-xylulose 5-phosphate biosynthesis; 1-deoxy-D-xylulose 5-phosphate from D-glyceraldehyde 3-phosphate and pyruvate: step 1/1. Catalyzes the acyloin condensation reaction between C atoms 2 and 3 of pyruvate and glyceraldehyde 3-phosphate to yield 1-deoxy-D-xylulose-5-phosphate (DXP). This Blochmanniella floridana protein is 1-deoxy-D-xylulose-5-phosphate synthase.